A 619-amino-acid polypeptide reads, in one-letter code: Transcription factor 7-like 2 (619 aa).

Residues methionine 1–aspartate 11 show a composition bias toward gly residues. Positions methionine 1 to glutamate 53 are CTNNB1-binding. The tract at residues methionine 1 to lysine 96 is disordered. A compositionally biased stretch (basic and acidic residues) spans isoleucine 19–aspartate 43. A Glycyl lysine isopeptide (Lys-Gly) (interchain with G-Cter in SUMO2) cross-link involves residue lysine 22. The segment covering serine 47–asparagine 57 has biased composition (polar residues). Basic and acidic residues predominate over residues glutamate 63–aspartate 91. A phosphothreonine; by NLK mark is found at threonine 201 and threonine 212. Residues threonine 201–glutamate 395 are mediates interaction with MAD2L2. Residues threonine 318–valine 328 are compositionally biased toward polar residues. Disordered stretches follow at residues threonine 318–isoleucine 350, arginine 420–histidine 441, cysteine 496–serine 547, and aspartate 574–glutamate 619. Lysine 320 participates in a covalent cross-link: Glycyl lysine isopeptide (Lys-Gly) (interchain with G-Cter in SUMO). Residues lysine 335–lysine 346 are compositionally biased toward basic and acidic residues. The segment at residues isoleucine 350 to serine 418 is a DNA-binding region (HMG box). Positions lysine 425 to lysine 430 match the Nuclear localization signal motif. Residues serine 459 to serine 505 form a promoter-specific activation domain region. The segment covering cysteine 496–aspartate 508 has biased composition (low complexity). Residue lysine 539 forms a Glycyl lysine isopeptide (Lys-Gly) (interchain with G-Cter in SUMO2) linkage. Low complexity predominate over residues aspartate 574–leucine 603. Residues alanine 604–glutamate 619 show a composition bias toward polar residues.

Belongs to the TCF/LEF family. In terms of assembly, interacts with TGFB1I1. Interacts with CTNNB1 (via the armadillo repeat); forms stable transcription complex. Interacts with EP300. Interacts with NLK. Interacts with CCDC85B (probably through the HMG box); prevents interaction with CTNNB1. Interacts with TNIK. Interacts with MAD2L2; prevents TCF7L2/TCF4 binding to promZIPK/DAPK3oters, negatively modulating its transcriptional activity. Interacts with ZIPK/DAPK3. Interacts with XIAP/BIRC4 and TLE3. Interacts with DDIT3/CHOP. The CTNNB1 and TCF7L2/TCF4 complex interacts with PML (isoform PML-4). Identified in a complex with CTNNB1 and FERMT2. Interacts with SPIN1. Interacts with C11orf84/SPINDOC in a SPIN1-dependent manner. Interacts with DAZAP2; the interaction results in localization of DAZAP2 to the nucleus. In vitro, phosphorylated by TNIK. Post-translationally, phosphorylated at Thr-201 and/or Thr-212 by NLK. Phosphorylation by NLK at these sites inhibits DNA-binding by TCF7L2/TCF4, thereby preventing transcriptional activation of target genes of the canonical Wnt/beta-catenin signaling pathway. In terms of processing, polysumoylated. Sumoylation is enhanced by PIAS family members and desumoylation is enhanced by SENP2. Sumoylation/desumoylation regulates TCF7L2/TCF4 transcription activity in the Wnt/beta-catenin signaling pathway without altering interaction with CTNNB1 nor binding to DNA. As to expression, detected in epithelium from small intestine, with the highest expression at the top of the crypts and a gradient of expression from crypt to villus. Detected in colon epithelium and colon cancer, and in epithelium from mammary gland and carcinomas derived therefrom.

The protein resides in the nucleus. The protein localises to the PML body. In terms of biological role, participates in the Wnt signaling pathway and modulates MYC expression by binding to its promoter in a sequence-specific manner. Acts as a repressor in the absence of CTNNB1, and as activator in its presence. Activates transcription from promoters with several copies of the Tcf motif 5'-CCTTTGATC-3' in the presence of CTNNB1. TLE1, TLE2, TLE3 and TLE4 repress transactivation mediated by TCF7L2/TCF4 and CTNNB1. Expression of dominant-negative mutants results in cell-cycle arrest in G1. Necessary for the maintenance of the epithelial stem-cell compartment of the small intestine. In Homo sapiens (Human), this protein is Transcription factor 7-like 2 (TCF7L2).